The following is a 134-amino-acid chain: Large ribosomal subunit protein uL16c (134 aa).

It belongs to the universal ribosomal protein uL16 family. In terms of assembly, part of the 50S ribosomal subunit.

The protein resides in the plastid. Its subcellular location is the chloroplast. The protein is Large ribosomal subunit protein uL16c of Pinus thunbergii (Japanese black pine).